Reading from the N-terminus, the 826-residue chain is Ubiquitin carboxyl-terminal hydrolase 16 (826 aa).

A UBP-type zinc finger spans residues 22 to 142; it reads PMCRHIRKGL…QVVDYVRKQA (121 aa). 12 residues coordinate Zn(2+): C24, H26, C48, C51, C74, C77, C82, H90, H94, H103, C116, and C119. K140 participates in a covalent cross-link: Glycyl lysine isopeptide (Lys-Gly) (interchain with G-Cter in SUMO2). The tract at residues 146-190 is disordered; that stretch reads TPKPAEKDNGNIELENKKLEKESKNEQEREKKENMAKENPPMNSP. Residues 149–181 show a composition bias toward basic and acidic residues; it reads PAEKDNGNIELENKKLEKESKNEQEREKKENMA. S189 is modified (phosphoserine). The USP domain occupies 196 to 825; it reads KGLSNLGNTC…QAYLLFYERI (630 aa). The active-site Nucleophile is C205. Positions 394–408 are enriched in basic and acidic residues; sequence SGKKSVNDKNLKKTM. Residues 394–460 form a disordered region; the sequence is SGKKSVNDKN…AKNQRRQQKI (67 aa). Over residues 409–420 the composition is skewed to acidic residues; that stretch reads EDEDQDSEEEKD. S415 carries the phosphoserine modification. Positions 421 to 430 are enriched in basic and acidic residues; the sequence is NDSYIKERSD. A compositionally biased stretch (basic residues) spans 438-458; the sequence is HLQKKAKKQAKKQAKNQRRQQ. At S552 the chain carries Phosphoserine. Residue T557 is modified to Phosphothreonine. The Proton acceptor role is filled by H761.

This sequence belongs to the peptidase C19 family. USP16 subfamily. In terms of assembly, homotetramer. Associates with late pre-40S ribosomes. Interacts with CEP78; promoting deubiquitination of tektins. Post-translationally, phosphorylated at the onset of mitosis and dephosphorylated during the metaphase/anaphase transition. Phosphorylation by AURKB enhances the deubiquitinase activity.

It localises to the nucleus. The catalysed reaction is Thiol-dependent hydrolysis of ester, thioester, amide, peptide and isopeptide bonds formed by the C-terminal Gly of ubiquitin (a 76-residue protein attached to proteins as an intracellular targeting signal).. Specifically deubiquitinates 'Lys-120' of histone H2A (H2AK119Ub), a specific tag for epigenetic transcriptional repression, thereby acting as a coactivator. Deubiquitination of histone H2A is a prerequisite for subsequent phosphorylation at 'Ser-11' of histone H3 (H3S10ph), and is required for chromosome segregation when cells enter into mitosis. In resting B- and T-lymphocytes, phosphorylation by AURKB leads to enhance its activity, thereby maintaining transcription in resting lymphocytes. Regulates Hox gene expression via histone H2A deubiquitination. Prefers nucleosomal substrates. Does not deubiquitinate histone H2B. Also deubiquitinates non-histone proteins, such as ribosomal protein RPS27A: deubiquitination of monoubiquitinated RPS27A promotes maturation of the 40S ribosomal subunit. Also mediates deubiquitination of tektin proteins (TEKT1, TEKT2, TEK3, TEKT4 and TEKT5), promoting their stability. The protein is Ubiquitin carboxyl-terminal hydrolase 16 of Macaca fascicularis (Crab-eating macaque).